Consider the following 128-residue polypeptide: Small ribosomal subunit protein uS13 (128 aa).

Residues 95 to 118 (GLPVRGQRTHTNARTRKGPKKGLV) show a composition bias toward basic residues. Residues 95-128 (GLPVRGQRTHTNARTRKGPKKGLVRKAAAPAPKA) form a disordered region.

Belongs to the universal ribosomal protein uS13 family. As to quaternary structure, part of the 30S ribosomal subunit. Forms a loose heterodimer with protein S19. Forms two bridges to the 50S subunit in the 70S ribosome.

Functionally, located at the top of the head of the 30S subunit, it contacts several helices of the 16S rRNA. In the 70S ribosome it contacts the 23S rRNA (bridge B1a) and protein L5 of the 50S subunit (bridge B1b), connecting the 2 subunits; these bridges are implicated in subunit movement. Contacts the tRNAs in the A and P-sites. This chain is Small ribosomal subunit protein uS13, found in Anaeromyxobacter sp. (strain K).